The sequence spans 142 residues: MAKKVEAYIKLQVAAGMANPSPPVGPALGQHGVNIMEFCKAFNAKTESIEKGLPIPVVISVYNDRSFTFVTKTPPAAVLLKKAAGVKSGSGRPNTEKVGTVTDAQLQEIAETKAADMTGADIEAMKRSIAGTARSMGLVVEG.

The protein belongs to the universal ribosomal protein uL11 family. In terms of assembly, part of the ribosomal stalk of the 50S ribosomal subunit. Interacts with L10 and the large rRNA to form the base of the stalk. L10 forms an elongated spine to which L12 dimers bind in a sequential fashion forming a multimeric L10(L12)X complex. One or more lysine residues are methylated.

Forms part of the ribosomal stalk which helps the ribosome interact with GTP-bound translation factors. This Aliivibrio fischeri (strain MJ11) (Vibrio fischeri) protein is Large ribosomal subunit protein uL11.